We begin with the raw amino-acid sequence, 430 residues long: Asparagine--tRNA ligase (430 aa).

The protein belongs to the class-II aminoacyl-tRNA synthetase family. As to quaternary structure, homodimer.

The protein localises to the cytoplasm. It catalyses the reaction tRNA(Asn) + L-asparagine + ATP = L-asparaginyl-tRNA(Asn) + AMP + diphosphate + H(+). The protein is Asparagine--tRNA ligase of Staphylococcus saprophyticus subsp. saprophyticus (strain ATCC 15305 / DSM 20229 / NCIMB 8711 / NCTC 7292 / S-41).